A 149-amino-acid chain; its full sequence is Nucleoside diphosphate kinase (149 aa).

Residues lysine 9, phenylalanine 57, arginine 85, threonine 91, arginine 102, and asparagine 112 each coordinate ATP. Residue histidine 115 is the Pros-phosphohistidine intermediate of the active site.

It belongs to the NDK family. Homotetramer. The cofactor is Mg(2+).

Its subcellular location is the cytoplasm. It carries out the reaction a 2'-deoxyribonucleoside 5'-diphosphate + ATP = a 2'-deoxyribonucleoside 5'-triphosphate + ADP. The catalysed reaction is a ribonucleoside 5'-diphosphate + ATP = a ribonucleoside 5'-triphosphate + ADP. Functionally, major role in the synthesis of nucleoside triphosphates other than ATP. The ATP gamma phosphate is transferred to the NDP beta phosphate via a ping-pong mechanism, using a phosphorylated active-site intermediate. The protein is Nucleoside diphosphate kinase of Cyanothece sp. (strain PCC 7425 / ATCC 29141).